We begin with the raw amino-acid sequence, 1107 residues long: Probable chromatin-remodeling complex ATPase chain (1107 aa).

Disordered regions lie at residues 1-124 and 177-217; these read MAKP…KREK and GNQS…GSGG. Composition is skewed to acidic residues over residues 8–25, 33–43, 53–65, and 89–114; these read DEEE…EEQS, GEEEDEEEEEA, GGEE…EEIE, and EGDE…DEAE. Positions 121–147 form a coiled coil; it reads KREKARLKEMQKLKKQKIQEILDTQNA. Residues 183–193 show a composition bias toward basic residues; the sequence is KKPRGRGRHAS. The segment covering 197-211 has biased composition (acidic residues); that stretch reads EEEEDEEYLKEEEDA. The Helicase ATP-binding domain occupies 243–408; sequence IRLYENGING…WSLLNFLLPE (166 aa). Position 256 to 263 (256 to 263) interacts with ATP; that stretch reads DEMGLGKT. Positions 359–362 match the DEAH box motif; the sequence is DEAH. The 152-residue stretch at 536–687 folds into the Helicase C-terminal domain; sequence LLDKLLPKLK…ALVIQQGRLA (152 aa). SANT domains lie at 877 to 929 and 978 to 1039; these read EGFA…ERYK and QNKG…DTLI. The stretch at 1029–1067 forms a coiled coil; that stretch reads QELARRCDTLIRLVEKENQEYDEQERQARKDKRMAKNMT. A disordered region spans residues 1049-1107; the sequence is YDEQERQARKDKRMAKNMTPTKRSALRVSEGETTPSNSFKRRRQSLMDDYVGSGRRKRG.

It belongs to the SNF2/RAD54 helicase family. ISWI subfamily.

It is found in the nucleus. In terms of biological role, possesses intrinsic ATP-dependent nucleosome-remodeling activity. Constitutes the catalytic subunit of several complexes capable of forming ordered nucleosome arrays on chromatin in vitro. The protein is Probable chromatin-remodeling complex ATPase chain of Oryza sativa subsp. japonica (Rice).